A 132-amino-acid polypeptide reads, in one-letter code: Ribosome-binding factor A (132 aa).

It belongs to the RbfA family. As to quaternary structure, monomer. Binds 30S ribosomal subunits, but not 50S ribosomal subunits or 70S ribosomes.

The protein localises to the cytoplasm. Its function is as follows. One of several proteins that assist in the late maturation steps of the functional core of the 30S ribosomal subunit. Associates with free 30S ribosomal subunits (but not with 30S subunits that are part of 70S ribosomes or polysomes). Required for efficient processing of 16S rRNA. May interact with the 5'-terminal helix region of 16S rRNA. In Pectobacterium carotovorum subsp. carotovorum (strain PC1), this protein is Ribosome-binding factor A.